The sequence spans 336 residues: Foldase protein PrsA (336 aa).

An N-terminal signal peptide occupies residues 1-22; that stretch reads MKSAKKLLSVLCLGIFILTFTA. Cys23 carries the N-palmitoyl cysteine lipid modification. Cys23 carries S-diacylglycerol cysteine lipidation. Positions 194–286 constitute a PpiC domain; the sequence is PNTMNVSHIL…WGYHIIKVNS (93 aa).

It belongs to the PrsA family.

Its subcellular location is the cell membrane. It carries out the reaction [protein]-peptidylproline (omega=180) = [protein]-peptidylproline (omega=0). Functionally, plays a major role in protein secretion by helping the post-translocational extracellular folding of several secreted proteins. The sequence is that of Foldase protein PrsA from Clostridium botulinum (strain ATCC 19397 / Type A).